The chain runs to 731 residues: Catalase-peroxidase (731 aa).

The tract at residues 1-24 (MSTEPNCPFSGNARKHTAAGAPSN) is disordered. Positions 96–219 (WHSAGTYRVS…LGAVQMGLIY (124 aa)) form a cross-link, tryptophyl-tyrosyl-methioninium (Trp-Tyr) (with M-245). His-97 (proton acceptor) is an active-site residue. Positions 219-245 (YVNPEGPNGNPDPIAAARDIRETFARM) form a cross-link, tryptophyl-tyrosyl-methioninium (Tyr-Met) (with W-96). Heme b is bound at residue His-260. The tract at residues 339–365 (GAQQWKPKGDAGAGTVPDAHDPSKRHA) is disordered.

The protein belongs to the peroxidase family. Peroxidase/catalase subfamily. As to quaternary structure, homodimer or homotetramer. Heme b serves as cofactor. Post-translationally, formation of the three residue Trp-Tyr-Met cross-link is important for the catalase, but not the peroxidase activity of the enzyme.

It catalyses the reaction H2O2 + AH2 = A + 2 H2O. The catalysed reaction is 2 H2O2 = O2 + 2 H2O. Bifunctional enzyme with both catalase and broad-spectrum peroxidase activity. This is Catalase-peroxidase from Polaromonas sp. (strain JS666 / ATCC BAA-500).